The following is a 356-amino-acid chain: Inactive ubiquitin thioesterase OTULINL (356 aa).

Residues 1-22 (MAATRSPTRARERERSGAPAAG) are disordered. The required for membrane binding stretch occupies residues 1–83 (MAATRSPTRA…KWWIGYLQRK (83 aa)). An OTU domain is found at 128–356 (KCVRQVRRDN…NDRHYHIPVF (229 aa)).

Belongs to the peptidase C65 family. Otulin subfamily. As to quaternary structure, does not bind ubiquitin or ubiquitin-like proteins.

Its subcellular location is the cytoplasm. It localises to the endoplasmic reticulum membrane. It is found in the nucleus envelope. Functionally, lacks deubiquitinase activity. The polypeptide is Inactive ubiquitin thioesterase OTULINL (Homo sapiens (Human)).